The sequence spans 237 residues: Lectin alpha chain (237 aa).

Positions 8 and 10 each coordinate Mn(2+). The Ca(2+) site is built by D10, Y12, N14, and D19. Position 12 (Y12) interacts with a carbohydrate. Mn(2+)-binding residues include D19 and H24. 99–100 contributes to the a carbohydrate binding site; sequence LY. D208 is a Ca(2+) binding site. R228 is a binding site for a carbohydrate.

It belongs to the leguminous lectin family. Equilibrium between homodimer and homotetramer. Oligomerization is pH-dependent with homotetramers forming at pH 6.5 and above. The beta and gamma chains are produced by partial proteolytic processing of the lectin alpha chain by an asparaginyl endopeptidase. Mixture of 60% alpha lectin and 40% of its beta and gamma proteolytic fragments. As to expression, seed.

Its subcellular location is the vacuole. The protein localises to the aleurone grain. In terms of biological role, D-mannose/D-glucose-binding lectin. Has anti-inflammatory activity in rats. Induces histamine release in mast cells from hamster and rat. Induces lymphocyte proliferation and IFNG production. Shows toxicity against the aquatic snail B.glabrata at concentrations higher than 20 ug/ml. This Dioclea virgata protein is Lectin alpha chain.